The following is a 365-amino-acid chain: Protein Tob1 (365 aa).

Positions 22–39 (RRRVNIFGEELERLLKQK) match the Bipartite nuclear localization signal motif. Residues 82–92 (VRGNLPQDLSV) are important for nuclear localization. Residues 144 to 160 (DPASSVSSSPSPPFGHS) show a composition bias toward low complexity. Residues 144 to 171 (DPASSVSSSPSPPFGHSAAVSPTFMPRS) form a disordered region. A required for interaction with CPEB3 region spans residues 161-220 (AAVSPTFMPRSTQPLTFTTATFAATKFGSTKMKNSGRSSKVARTSPISLGLNVNVNDLLK). Thr204 is subject to Phosphothreonine. The short motif at 228 to 236 (MHSLYGLGL) is the Nuclear export signal element. The disordered stretch occupies residues 233–287 (GLGLGSQQQPQPQPQQPPSQPPPPPPPPQQQQQHQQQQQQQQQQQQQPQQQTSAL). A compositionally biased stretch (pro residues) spans 243–261 (QPQPQQPPSQPPPPPPPPQ). Positions 262–283 (QQQQHQQQQQQQQQQQQQPQQQ) are enriched in low complexity.

It belongs to the BTG family. In terms of assembly, interacts with ERBB2. Interacts with CNOT7. Interacts with CPEB3 (via C-terminal RNA-binding region); recruits CNOT7 to CPEB3 to form a ternary complex required for mRNA deadenylation and decay. Interacts with CNOT8. Interacts with CPEB4. Post-translationally, phosphorylated on Ser and Thr residues.

It is found in the cytoplasm. The protein resides in the nucleus. Functionally, anti-proliferative protein; the function is mediated by association with deadenylase subunits of the CCR4-NOT complex. Mediates CPEB3-accelerated mRNA deadenylation by binding to CPEB3 and recruiting CNOT7 which leads to target mRNA deadenylation and decay. The polypeptide is Protein Tob1 (Tob1) (Rattus norvegicus (Rat)).